Consider the following 349-residue polypeptide: Aminomethyltransferase (349 aa).

The protein belongs to the GcvT family. As to quaternary structure, the glycine cleavage system is composed of four proteins: P, T, L and H.

The enzyme catalyses N(6)-[(R)-S(8)-aminomethyldihydrolipoyl]-L-lysyl-[protein] + (6S)-5,6,7,8-tetrahydrofolate = N(6)-[(R)-dihydrolipoyl]-L-lysyl-[protein] + (6R)-5,10-methylene-5,6,7,8-tetrahydrofolate + NH4(+). Functionally, the glycine cleavage system catalyzes the degradation of glycine. The sequence is that of Aminomethyltransferase from Thermus thermophilus (strain ATCC 27634 / DSM 579 / HB8).